Consider the following 197-residue polypeptide: DnaJ homolog subfamily C member 5 (197 aa).

Residues 13-82 (GESLYHVLGL…RNIYDKYGSL (70 aa)) form the J domain. The interval 153-197 (EDLEAQMQSDERDTEGPVLVQPASATETTQLTSDSHASYHTDGFN) is disordered. Over residues 175–197 (ASATETTQLTSDSHASYHTDGFN) the composition is skewed to polar residues.

In terms of processing, palmitoylated. Palmitoylation occurs probably in the cysteine-rich domain and regulates DNAJC5 stable membrane attachment.

It is found in the cytoplasm. The protein localises to the cytosol. The protein resides in the membrane. Its subcellular location is the cytoplasmic vesicle. It localises to the secretory vesicle. It is found in the chromaffin granule membrane. The protein localises to the melanosome. The protein resides in the cell membrane. Its function is as follows. May have an important role in presynaptic function. May be involved in calcium-dependent neurotransmitter release at nerve endings. The protein is DnaJ homolog subfamily C member 5 of Xenopus laevis (African clawed frog).